Consider the following 425-residue polypeptide: Glutamate-1-semialdehyde 2,1-aminomutase (425 aa).

K264 is subject to N6-(pyridoxal phosphate)lysine.

This sequence belongs to the class-III pyridoxal-phosphate-dependent aminotransferase family. HemL subfamily. Homodimer. The cofactor is pyridoxal 5'-phosphate.

It localises to the cytoplasm. It catalyses the reaction (S)-4-amino-5-oxopentanoate = 5-aminolevulinate. The protein operates within porphyrin-containing compound metabolism; protoporphyrin-IX biosynthesis; 5-aminolevulinate from L-glutamyl-tRNA(Glu): step 2/2. In Leptospira biflexa serovar Patoc (strain Patoc 1 / Ames), this protein is Glutamate-1-semialdehyde 2,1-aminomutase.